The primary structure comprises 2160 residues: MAYFLPSFFQKRLLRYALSRLELVDTEALDLDSLGIRWGQRSTVELRDIGLRLELPASSELLSAKVQFLKITVPADIYSSGIICEASGINVHLQLPSEESFSTAKDGNPNSRSPSKAGTHDSSSDHILPTPADLAESFLDAEPKEEKEELQAAITSRSQMLQRTSASISDDEEELGLGNEGVSLPSFVAAFLKGVAERLQVRVDNVSIRVDMEMKQEGVVKREPENKPDNVTGLLTVREVSVGAVSSATSSSEQEKLFRNRPIVISDINMALISEPIVFSNYSRFAPPASPTTPVQPKSSEPSSRIPSPLPGHTPDADSFLAMTRSTILETQQEHWIQDIEEPGVGRMEGSAYTYDGRFSDADTDAEDRSDGYLEGAQQFLDNDKLLDNPAYLDSVIDSQLHDDDLEPPEDLVPQDDQFPPSSATPRPPKPEVHMYRETSPSGIDTEQTAPFSHYGDGFFMDRSPHGSQPYLGPDHVATRNASHSASSPSGSLPSREISNRQTAPPSESGSIGSSDFANGGELSESKLFSTEEAQSMYMSAISHGSSRSFVPNVPGAWDLWESTVAQDMHAGTQLTDAADAKQDVQDETSISTPKLTAQAASAFTEKRSFGEQSECLSEAREPDLAPLSPTLSKLSDVAKRFLRIDRISISIPVGEDRRHTDETVHSSDLNLASDSPKDSTVHSGHSSAESEFLSSTMYASARLRSDSINLAPSFEGTLPRSLPRQGKKADHDPISKSQPGDIAVEISAVDIRFDNAVGWLVVKIGQRVLHAFRDGGNVSSGKPAPESVQTRHSLALTLHDFSIKYVDHIPGQTYALNDYDPHSSSFFGLPHEDIILRAEASGLTARYLADKSATKFSLDVSKFVFGFAWDDLISFSESLKMRESTRDVLAPVNGDISLSLTKSSDSASLTITTLPLRLHLNVQRLEEIFGRVGGLSTILELGSSISSASTGFSTAKNMQRDSPRRARGVHFESSPPPENILPANPQLSWKVNARVGGIVFDVVGETHYLRLKTTAVKVVSRFEGIGVQIDKAKLSGPLPLDDSRDAPAKINLSNIRVEFLYSPKEPDLDRLLAIITPSKDKYDEDDDIMLDTLFRQRRQGSVLRTTVADAKIIISRTSDLESLSQLEEELGKLSTVAKYLPEDDRPGILTLTLIRELECQVYLGGPVGNITTHLRNAEAAYISMPSLIAAQLGTIKVVRNGSEELVGEALPASGSQGQNQSQLPILMARYIADEMDPTIKIKSHNLRVEYTIPSIIAFLGLSEDQTTGDVAANMANSLANIAESQHLHRNASETSIGSKGRQASAKPRKLAFALRDCVLALNPRCTTAKGLVVLTNAKFSAAISDSGCSEAMLDLKKASIMVIDDVKNMGLAENLQRGRSTIPQSDQIQSFIDMGFVPVSSISSAMATVKLLQLDDDGTKSVDVELKDDLLILETCADSTQTLISIINGLQPPTPPSVAVKYRTEVLPIEDMLASFSGDAFAMDPPPGQAEITEAPTIVEPEDGGPRIEDELEYVSDFYPVKSGPDNLAPTGSAVPSESNELLDSFHSQYYVSSSVSDLEFKEDHFANHSAVGGTAHRWDSTQNTYGLTDDSKIRKSPLRIRVRDAHIIWNLFDGYDWQRTRDTISKAVKDVEKRATERRARAGSRASPGFEEEEESVIGDCLFNSIYIGIPANKDPRELRNDINRNIDDLVSETGSYATTTTVTGATARQAQSPSYRGRRLKLSRSKYHKMTFELKGICADFVVFPPGSEETQSSLDVRVNDLEIFDHVPTSTWKKFATYMHEAGERESGASMVHLEMLTVRPVPELAASELVLKATLLPLRLHVDQDALDFICRFFEFRDDTAPTPSSPADIPFLQRVEVNAVPVKLDFKPKRVDYAGLRSGRTTEFMNFFVLDGADMVMRHVIIYGVSGFDKLGQTLNDIWMPDIKRNQLPGVLAGLAPIRSLVNVGGGVKDLVVVPMREYRKDGRIVRSIQKGALAFAKTTSNELVKLGAKLAIGTQTVLQGAEEMLTAPTATTLGSEEDMIDEEEANKISPYADQPVGVVQGLRGAFRGLERDLLLARDAIVAVPGEIVESGSAKAAAKAVLKRAPTVILRPAIGVSKAVGQTLLGAGNTLDPSNRRKIEDVSVMVKYVSRVCLLTSLLRNINAIKTVGHIGQL.

Composition is skewed to polar residues over residues 100–116 (SFSTAKDGNPNSRSPSK), 153–168 (AITSRSQMLQRTSASI), and 292–306 (TTPVQPKSSEPSSRI). 8 disordered regions span residues 100–130 (SFSTAKDGNPNSRSPSKAGTHDSSSDHILPT), 142–174 (EPKEEKEELQAAITSRSQMLQRTSASISDDEEE), 288–317 (PASPTTPVQPKSSEPSSRIPSPLPGHTPDA), 347–371 (RMEGSAYTYDGRFSDADTDAEDRSD), 401–519 (LHDD…DFAN), 657–689 (DRRHTDETVHSSDLNLASDSPKDSTVHSGHSSA), 715–739 (FEGTLPRSLPRQGKKADHDPISKSQ), and 953–978 (FSTAKNMQRDSPRRARGVHFESSPPP). Residues 404–414 (DDLEPPEDLVP) show a composition bias toward acidic residues. The span at 415–425 (QDDQFPPSSAT) shows a compositional bias: low complexity. Over residues 439–451 (TSPSGIDTEQTAP) the composition is skewed to polar residues. Over residues 483-497 (SHSASSPSGSLPSRE) the composition is skewed to low complexity. The span at 500-517 (NRQTAPPSESGSIGSSDF) shows a compositional bias: polar residues. Over residues 657–666 (DRRHTDETVH) the composition is skewed to basic and acidic residues.

Belongs to the ATG2 family.

It localises to the preautophagosomal structure membrane. The protein resides in the endoplasmic reticulum membrane. The catalysed reaction is a 1,2-diacyl-sn-glycero-3-phosphocholine(in) = a 1,2-diacyl-sn-glycero-3-phosphocholine(out). It catalyses the reaction a 1,2-diacyl-sn-glycero-3-phospho-L-serine(in) = a 1,2-diacyl-sn-glycero-3-phospho-L-serine(out). It carries out the reaction a 1,2-diacyl-sn-glycero-3-phosphoethanolamine(in) = a 1,2-diacyl-sn-glycero-3-phosphoethanolamine(out). In terms of biological role, lipid transfer protein required for autophagosome completion and peroxisome degradation. Tethers the edge of the isolation membrane (IM) to the endoplasmic reticulum (ER) and mediates direct lipid transfer from ER to IM for IM expansion. Atg2 binds to the ER exit site (ERES), which is the membrane source for autophagosome formation, using basic residues in its N-terminal region (NR) and to the expanding edge of the IM through its C-terminal region. The latter binding is assisted by an atg18-PtdIns3P interaction. Atg2 then extracts phospholipids from the membrane source using its NR and transfers them to atg9 to the IM through its predicted beta-sheet-rich structure for membrane expansion. The chain is Autophagy-related protein 2 (atg2) from Aspergillus fumigatus (strain ATCC MYA-4609 / CBS 101355 / FGSC A1100 / Af293) (Neosartorya fumigata).